The sequence spans 118 residues: NADH-ubiquinone oxidoreductase chain 3 (118 aa).

The next 3 helical transmembrane spans lie at 9 to 29 (IYLV…FLFA), 62 to 82 (LVSI…PWAV), and 87 to 107 (IDLF…IGFL).

The protein belongs to the complex I subunit 3 family.

It localises to the mitochondrion membrane. It catalyses the reaction a ubiquinone + NADH + 5 H(+)(in) = a ubiquinol + NAD(+) + 4 H(+)(out). Functionally, core subunit of the mitochondrial membrane respiratory chain NADH dehydrogenase (Complex I) that is believed to belong to the minimal assembly required for catalysis. Complex I functions in the transfer of electrons from NADH to the respiratory chain. The immediate electron acceptor for the enzyme is believed to be ubiquinone. The sequence is that of NADH-ubiquinone oxidoreductase chain 3 (ND3) from Triticum aestivum (Wheat).